Consider the following 142-residue polypeptide: Large ribosomal subunit protein uL11 (142 aa).

The protein belongs to the universal ribosomal protein uL11 family. As to quaternary structure, part of the ribosomal stalk of the 50S ribosomal subunit. Interacts with L10 and the large rRNA to form the base of the stalk. L10 forms an elongated spine to which L12 dimers bind in a sequential fashion forming a multimeric L10(L12)X complex. In terms of processing, one or more lysine residues are methylated.

Functionally, forms part of the ribosomal stalk which helps the ribosome interact with GTP-bound translation factors. In Mycobacteroides abscessus (strain ATCC 19977 / DSM 44196 / CCUG 20993 / CIP 104536 / JCM 13569 / NCTC 13031 / TMC 1543 / L948) (Mycobacterium abscessus), this protein is Large ribosomal subunit protein uL11.